A 307-amino-acid polypeptide reads, in one-letter code: Ribosomal protein L11 methyltransferase (307 aa).

4 residues coordinate S-adenosyl-L-methionine: threonine 162, glycine 183, aspartate 205, and asparagine 244.

Belongs to the methyltransferase superfamily. PrmA family.

The protein resides in the cytoplasm. The enzyme catalyses L-lysyl-[protein] + 3 S-adenosyl-L-methionine = N(6),N(6),N(6)-trimethyl-L-lysyl-[protein] + 3 S-adenosyl-L-homocysteine + 3 H(+). Methylates ribosomal protein L11. This chain is Ribosomal protein L11 methyltransferase, found in Bordetella bronchiseptica (strain ATCC BAA-588 / NCTC 13252 / RB50) (Alcaligenes bronchisepticus).